A 274-amino-acid polypeptide reads, in one-letter code: MQFAKMHGLGNDFMVVDAVTQNVYFSPELIRRLADRHTGVGFDQLLVVEPPYDPDLDFHYRIFNADGSEVAQCGNGARCFARFVRIKGLTNRRDIRVSTQNSRMTLHVGEDDRVTVNMGEPQFEPGRIPFKAAKAEKTYILRVAQQTVLCGAVSMGNPHCVLQVEDISRAQVELLGPSLESHERFPERVNVGFMQVVERSHIRLRVYERGAGETQACGSGACAAVAVGIQQGLLDEQVQVDLPGGTLHIRWPGPGTPLLMTGPAAHVYDGFIHL.

Residues N11, Q44, and N64 each coordinate substrate. C73 functions as the Proton donor in the catalytic mechanism. Residues 74 to 75 (GN), N157, N190, and 208 to 209 (ER) each bind substrate. The active-site Proton acceptor is the C217. Residue 218 to 219 (GS) coordinates substrate.

The protein belongs to the diaminopimelate epimerase family. As to quaternary structure, homodimer.

Its subcellular location is the cytoplasm. It carries out the reaction (2S,6S)-2,6-diaminopimelate = meso-2,6-diaminopimelate. It participates in amino-acid biosynthesis; L-lysine biosynthesis via DAP pathway; DL-2,6-diaminopimelate from LL-2,6-diaminopimelate: step 1/1. Catalyzes the stereoinversion of LL-2,6-diaminopimelate (L,L-DAP) to meso-diaminopimelate (meso-DAP), a precursor of L-lysine and an essential component of the bacterial peptidoglycan. This is Diaminopimelate epimerase from Edwardsiella ictaluri (strain 93-146).